The sequence spans 301 residues: GLABROUS1 enhancer-binding protein-like 2 (301 aa).

Residues 1-62 form a disordered region; that stretch reads MATPTELGFS…NTKMASPPSN (62 aa). Residues 44 to 54 are compositionally biased toward basic residues; the sequence is KKKKKKTKHNT. The interval 268–289 is non-canonical leucine-zipper; it reads LSNEWKALCVEELKLNINKLRF.

This sequence belongs to the GeBP family. Homo- and heterodimers. Interacts with GEBP, GPL1 and GPL3. In terms of tissue distribution, expressed in the apical meristem and young leaf primordia. Detected in the vascular tissues of cotyledons and leaves, in hydathodes and in the septun of siliques, but not in roots.

The protein resides in the nucleus. In terms of biological role, probable transcription factor. May play redundant roles with GEBP and GPL1 in cytokinin responses by regulating the transcript levels of type-A ARR response genes. Involved in stress responses. Plays a repressive role in cell expansion by counteracting the positive role of CPR5 in this process, but does not regulate cell proliferation or endoreduplication. In Arabidopsis thaliana (Mouse-ear cress), this protein is GLABROUS1 enhancer-binding protein-like 2.